A 353-amino-acid chain; its full sequence is Photosystem II D2 protein (353 aa).

An N-acetylthreonine modification is found at Thr-2. Thr-2 carries the phosphothreonine modification. A helical membrane pass occupies residues 41-61 (CAYFALGGWFTGTTFVTSWYT). Position 118 (His-118) interacts with chlorophyll a. The helical transmembrane segment at 125-141 (GFMLRQFELARSVQLRP) threads the bilayer. Gln-130 and Asn-143 together coordinate pheophytin a. Residues 153 to 166 (VFVSVFLIYPLGQS) form a helical membrane-spanning segment. His-198 contributes to the chlorophyll a binding site. Residues 208–228 (AALLCAIHGATVENTLFEDGD) traverse the membrane as a helical segment. Residues His-215 and Phe-262 each contribute to the a plastoquinone site. Fe cation is bound at residue His-215. His-269 is a binding site for Fe cation. The helical transmembrane segment at 279-295 (GLWMSALGVVGLALNLR) threads the bilayer.

It belongs to the reaction center PufL/M/PsbA/D family. As to quaternary structure, PSII is composed of 1 copy each of membrane proteins PsbA, PsbB, PsbC, PsbD, PsbE, PsbF, PsbH, PsbI, PsbJ, PsbK, PsbL, PsbM, PsbT, PsbX, PsbY, PsbZ, Psb30/Ycf12, at least 3 peripheral proteins of the oxygen-evolving complex and a large number of cofactors. It forms dimeric complexes. Interacts with PAM68. The D1/D2 heterodimer binds P680, chlorophylls that are the primary electron donor of PSII, and subsequent electron acceptors. It shares a non-heme iron and each subunit binds pheophytin, quinone, additional chlorophylls, carotenoids and lipids. There is also a Cl(-1) ion associated with D1 and D2, which is required for oxygen evolution. The PSII complex binds additional chlorophylls, carotenoids and specific lipids. serves as cofactor. Phosphorylation occurs in normal plant growth light conditions. Rapid dephosphorylation occurs during heat shock.

The protein localises to the plastid. It localises to the chloroplast thylakoid membrane. The enzyme catalyses 2 a plastoquinone + 4 hnu + 2 H2O = 2 a plastoquinol + O2. Its function is as follows. Photosystem II (PSII) is a light-driven water:plastoquinone oxidoreductase that uses light energy to abstract electrons from H(2)O, generating O(2) and a proton gradient subsequently used for ATP formation. It consists of a core antenna complex that captures photons, and an electron transfer chain that converts photonic excitation into a charge separation. The D1/D2 (PsbA/PsbD) reaction center heterodimer binds P680, the primary electron donor of PSII as well as several subsequent electron acceptors. D2 is needed for assembly of a stable PSII complex. This Arabidopsis thaliana (Mouse-ear cress) protein is Photosystem II D2 protein.